Here is a 382-residue protein sequence, read N- to C-terminus: Solvent efflux pump periplasmic linker SrpA (382 aa).

The signal sequence occupies residues 1–23; it reads MRQIRSPRALRVIPLTALMLISG. Cys-24 is lipidated: N-palmitoyl cysteine. Cys-24 carries S-diacylglycerol cysteine lipidation. Positions 98–127 form a coiled coil; it reads RTYEAQLRRAEANRTSAQNLARRYETLLKT.

Belongs to the membrane fusion protein (MFP) (TC 8.A.1) family.

The protein localises to the cell inner membrane. The periplasmic linker protein component of an organic solvent efflux pump. Involved in export of a number of low log POW compounds including hexane (log POW 3.5), toluene (log POW 2.5) and dimethylphthalate (log POW 2.3). The solvent resistance phenotype has been postulated to depend on the operon expression level. In Pseudomonas putida (Arthrobacter siderocapsulatus), this protein is Solvent efflux pump periplasmic linker SrpA (srpA).